A 577-amino-acid polypeptide reads, in one-letter code: MESKGSWTVADAVDYKGRPADKSKTGGWITAALILGIEVVERLSTMGIAVNLVTYLMETMHLPSSTSANIVTDFMGTSFLLCLLGGFLADSFLGRFKTIGIFSTIQALGTGALAVATKLPELRPPTCHHGEACIPATAFQMTILYVSLYLIALGTGGLKSSISGFGSDQFDDKDPKEKAHMAFFFNRFFFFISMGTLLAVTVLVYMQDEVGRSWAYGICTVSMAIAIVIFLCGTKRYRYKKSQGSPVVQIFQVIAAAFRKRKMELPQSIVYLYEDNPEGIRIEHTDQFHLLDKAAIVAEGDFEQTLDGVAIPNPWKLSSVTKVEEVKMMVRLLPIWATTIIFWTTYAQMITFSVEQASTMRRNIGSFKIPAGSLTVFFVAAILITLAVYDRAIMPFWKKWKGKPGFSSLQRIAIGLVLSTAGMAAAALVEQKRLSVAKSSSQKTLPISVFLLVPQFFLVGAGEAFIYTGQLDFFITQSPKGMKTMSTGLFLTTLSLGFFVSSFLVSIVKRVTSTSTDVGWLADNINHGRLDYFYWLLVILSGINFVVYIICALWFKPTKGKDSVEKENGKGFSVEDC.

A run of 12 helical transmembrane segments spans residues 28 to 48, 74 to 94, 96 to 116, 134 to 154, 183 to 203, 214 to 234, 332 to 352, 369 to 389, 409 to 429, 447 to 467, 488 to 508, and 535 to 555; these read WITA…TMGI, FMGT…SFLG, FKTI…LAVA, IPAT…IALG, FFFN…VTVL, WAYG…LCGT, LLPI…MITF, IPAG…LAVY, LQRI…AALV, ISVF…AFIY, GLFL…VSIV, and WLLV…ALWF.

Belongs to the major facilitator superfamily. Proton-dependent oligopeptide transporter (POT/PTR) (TC 2.A.17) family. As to expression, expressed in shoots, leaves, flowers and siliques. Expressed in leaf petiole.

It is found in the membrane. Functionally, low-affinity proton-dependent nitrate transporter. Not involved in dipeptides transport. The protein is Protein NRT1/ PTR FAMILY 6.2 (NPF6.2) of Arabidopsis thaliana (Mouse-ear cress).